A 44-amino-acid chain; its full sequence is Photosystem I reaction center subunit IX (44 aa).

The chain crosses the membrane as a helical span at residues 7 to 27; sequence YLSVAPVLSTLWFGALAGLLI.

This sequence belongs to the PsaJ family.

The protein localises to the plastid. Its subcellular location is the chloroplast thylakoid membrane. Its function is as follows. May help in the organization of the PsaE and PsaF subunits. In Eucalyptus globulus subsp. globulus (Tasmanian blue gum), this protein is Photosystem I reaction center subunit IX.